Here is a 174-residue protein sequence, read N- to C-terminus: RNA pyrophosphohydrolase (174 aa).

The 144-residue stretch at 6-149 (GFRANVGIII…KRDVYRKVMK (144 aa)) folds into the Nudix hydrolase domain. A Nudix box motif is present at residues 38-59 (GGVDDGESAEEAMYRELYEEVG).

It belongs to the Nudix hydrolase family. RppH subfamily. It depends on a divalent metal cation as a cofactor.

In terms of biological role, accelerates the degradation of transcripts by removing pyrophosphate from the 5'-end of triphosphorylated RNA, leading to a more labile monophosphorylated state that can stimulate subsequent ribonuclease cleavage. This Shewanella sp. (strain ANA-3) protein is RNA pyrophosphohydrolase.